The following is an 83-amino-acid chain: Beta-toxin Ct7 (83 aa).

The N-terminal stretch at 1 to 18 (MKVLILIIASVLLIGVEC) is a signal peptide. One can recognise an LCN-type CS-alpha/beta domain in the interval 19 to 81 (KDGYPMNSEG…VWDSATNKCG (63 aa)). 4 cysteine pairs are disulfide-bonded: cysteine 29–cysteine 80, cysteine 33–cysteine 54, cysteine 40–cysteine 61, and cysteine 44–cysteine 63. Position 81 is a glycine amide (glycine 81). A propeptide is located at residue glycine 82.

The protein belongs to the long (4 C-C) scorpion toxin superfamily. Sodium channel inhibitor family. Beta subfamily. In terms of tissue distribution, expressed by the venom gland.

The protein resides in the secreted. Functionally, beta toxins bind voltage-independently at site-4 of sodium channels (Nav) and shift the voltage of activation toward more negative potentials thereby affecting sodium channel activation and promoting spontaneous and repetitive firing. Is possibly toxic to mice, freshwater shrimp and crickets. The sequence is that of Beta-toxin Ct7 from Centruroides tecomanus (Scorpion).